The chain runs to 32 residues: Allergen Asp fl 1 (32 aa).

This is Allergen Asp fl 1 from Aspergillus flavus.